Reading from the N-terminus, the 164-residue chain is 17.8 kDa heat shock protein (164 aa).

Residues 20–154 (VVAGEARPPM…HAGNGKAAGD (135 aa)) form the sHSP domain. A disordered region spans residues 68-93 (GEHEDANNAAKAGKASGEEEEENDGV).

Belongs to the small heat shock protein (HSP20) family. In terms of assembly, may form oligomeric structures.

Its subcellular location is the cytoplasm. The protein is 17.8 kDa heat shock protein (HSP17.8) of Oryza sativa subsp. japonica (Rice).